We begin with the raw amino-acid sequence, 348 residues long: Oxygen-dependent coproporphyrinogen-III oxidase (348 aa).

Serine 104 is a binding site for substrate. Histidine 108 and histidine 118 together coordinate a divalent metal cation. Catalysis depends on histidine 118, which acts as the Proton donor. Residue 120 to 122 (NYR) participates in substrate binding. Positions 152 and 182 each coordinate a divalent metal cation. The important for dimerization stretch occupies residues 272–307 (YAEFNLVWDRGTIFGLQTNGRTESILMSLPPLARWE).

This sequence belongs to the aerobic coproporphyrinogen-III oxidase family. As to quaternary structure, homodimer. Requires a divalent metal cation as cofactor.

It is found in the cytoplasm. The catalysed reaction is coproporphyrinogen III + O2 + 2 H(+) = protoporphyrinogen IX + 2 CO2 + 2 H2O. The protein operates within porphyrin-containing compound metabolism; protoporphyrin-IX biosynthesis; protoporphyrinogen-IX from coproporphyrinogen-III (O2 route): step 1/1. Involved in the heme and chlorophyll biosynthesis. Catalyzes the aerobic oxidative decarboxylation of propionate groups of rings A and B of coproporphyrinogen-III to yield the vinyl groups in protoporphyrinogen-IX. The sequence is that of Oxygen-dependent coproporphyrinogen-III oxidase from Prochlorococcus marinus (strain NATL1A).